The chain runs to 120 residues: Large ribosomal subunit protein bL20 (120 aa).

It belongs to the bacterial ribosomal protein bL20 family.

Its function is as follows. Binds directly to 23S ribosomal RNA and is necessary for the in vitro assembly process of the 50S ribosomal subunit. It is not involved in the protein synthesizing functions of that subunit. This is Large ribosomal subunit protein bL20 from Pseudoalteromonas translucida (strain TAC 125).